We begin with the raw amino-acid sequence, 350 residues long: Transmembrane protein 185B (350 aa).

Transmembrane regions (helical) follow at residues 16–36, 41–61, 81–101, 111–131, 168–188, 211–231, and 240–260; these read LIYA…DGVI, WAVF…ASVG, FKAM…EVLV, FWLL…AACV, WLVV…VVLY, VTMA…EVLL, and MFSY…LMAT.

This sequence belongs to the TMEM185 family.

Its subcellular location is the membrane. This Bos taurus (Bovine) protein is Transmembrane protein 185B (TMEM185B).